A 617-amino-acid chain; its full sequence is Vacuolar protein sorting-associated protein 33A (617 aa).

The segment at 268 to 287 (NFPSDGALPGGGGSGPRVEE) is disordered.

The protein belongs to the STXBP/unc-18/SEC1 family. In terms of assembly, component of the class C core vacuole/endosome tethering (CORVET) complex composed of at least Vps8, dor/Vps18, car/Vps33A and Vps16A; unlike in other species, Vps11 is not part of the Drosophila complex. Due to the reduced number of components the Drosophila CORVET complex is often referred to as the miniCORVET complex. Interacts with ema. Component of the homotypic fusion and vacuole protein sorting (HOPS) complex, composed of Vps16A, car/Vps33A, dor/Vps18, Vps39, Vps11 and lt/Vps41. The tethering complex core made up of Vps16A, car/Vps33A and dor/Vps18 and shared by both HOPS and CORVET, preferentially associates with CORVET specific Vps8 over HOPS specific lt/Vps41. Interacts with Syx17 (via SNARE domain); the interaction requires Vps16A, may involve additional components of the HOPS complex and may promote assembly of the Syx17-Snap29-Vamp7 trans-SNARE complex.

It is found in the early endosome. It localises to the late endosome membrane. The protein resides in the lysosome membrane. Functionally, core component of the class C core vacuole/endosome tethering (CORVET) and the homotypic fusion and vacuole protein sorting (HOPS) tethering complexes involved in endo-lysosomal vesicle trafficking and lysosome biogenesis. The CORVET complex facilitates docking and fusion of endosomal vesicles during endosome maturation, acts upstream of HOPS, but is not involved in autophagic flux. The CORVET complex may cooperate with the early endosomal tether Rbsn-5 to mediate endosomal fusion. The HOPS complex facilitates docking and fusion of lysosomes with late endosomes and several other types of vesicles. The HOPS complex is also involved in autophagy and crinophagy (the elimination of unused secretory granules through their fusion with lysosomes). The HOPS complex probably instigates autophagosome-lysosome fusion by binding autophagosome associated Syx17/syntaxin 17 and promoting assembly of the trans-SNARE complex. Independent of Syx17/syntaxin 17 HOPS is involved in biosynthetic transport to lysosomes and lysosome-related organelles such as eye-pigment granules. Required for endocytic degradation of boss/bride of sevenless and N/Notch in developing ommatidia. The sequence is that of Vacuolar protein sorting-associated protein 33A from Drosophila melanogaster (Fruit fly).